An 871-amino-acid chain; its full sequence is Translation initiation factor IF-2 (871 aa).

Disordered stretches follow at residues 60-101 and 184-203; these read KKNI…QEVK and ESLKKKKKEKKSFVASKKES. The segment covering 61-72 has biased composition (basic residues); that stretch reads KNIKTPTAKKPK. Basic and acidic residues predominate over residues 73 to 101; it reads KENIKEQEKLNESEKKEPKKEEKLKQEVK. In terms of domain architecture, tr-type G spans 370-537; it reads TRAPVITIMG…IVLLQADILE (168 aa). The G1 stretch occupies residues 379-386; it reads GHVDHGKT. A GTP-binding site is contributed by 379–386; that stretch reads GHVDHGKT. Positions 404-408 are G2; sequence GITQH. The G3 stretch occupies residues 425 to 428; sequence DTPG. GTP is bound by residues 425 to 429 and 479 to 482; these read DTPGH and NKMD. A G4 region spans residues 479 to 482; that stretch reads NKMD. Residues 515 to 517 form a G5 region; the sequence is SAK.

This sequence belongs to the TRAFAC class translation factor GTPase superfamily. Classic translation factor GTPase family. IF-2 subfamily.

It localises to the cytoplasm. Its function is as follows. One of the essential components for the initiation of protein synthesis. Protects formylmethionyl-tRNA from spontaneous hydrolysis and promotes its binding to the 30S ribosomal subunits. Also involved in the hydrolysis of GTP during the formation of the 70S ribosomal complex. The protein is Translation initiation factor IF-2 of Campylobacter jejuni subsp. jejuni serotype O:23/36 (strain 81-176).